We begin with the raw amino-acid sequence, 426 residues long: Serine hydroxymethyltransferase (426 aa).

(6S)-5,6,7,8-tetrahydrofolate is bound by residues Leu-122 and 126–128; that span reads GHL. Residue Lys-231 is modified to N6-(pyridoxal phosphate)lysine. Residues Glu-247 and 355–357 contribute to the (6S)-5,6,7,8-tetrahydrofolate site; that span reads SPF.

This sequence belongs to the SHMT family. Homodimer. Pyridoxal 5'-phosphate is required as a cofactor.

It localises to the cytoplasm. The enzyme catalyses (6R)-5,10-methylene-5,6,7,8-tetrahydrofolate + glycine + H2O = (6S)-5,6,7,8-tetrahydrofolate + L-serine. It functions in the pathway one-carbon metabolism; tetrahydrofolate interconversion. Its pathway is amino-acid biosynthesis; glycine biosynthesis; glycine from L-serine: step 1/1. Functionally, catalyzes the reversible interconversion of serine and glycine with tetrahydrofolate (THF) serving as the one-carbon carrier. This reaction serves as the major source of one-carbon groups required for the biosynthesis of purines, thymidylate, methionine, and other important biomolecules. Also exhibits THF-independent aldolase activity toward beta-hydroxyamino acids, producing glycine and aldehydes, via a retro-aldol mechanism. The protein is Serine hydroxymethyltransferase of Cyanothece sp. (strain PCC 7425 / ATCC 29141).